The primary structure comprises 285 residues: Probable endonuclease 4 (285 aa).

Residues His-69, His-109, Glu-145, Asp-179, His-182, His-216, Asp-229, His-231, and Glu-261 each contribute to the Zn(2+) site.

It belongs to the AP endonuclease 2 family. Requires Zn(2+) as cofactor.

The catalysed reaction is Endonucleolytic cleavage to 5'-phosphooligonucleotide end-products.. Its function is as follows. Endonuclease IV plays a role in DNA repair. It cleaves phosphodiester bonds at apurinic or apyrimidinic (AP) sites, generating a 3'-hydroxyl group and a 5'-terminal sugar phosphate. The polypeptide is Probable endonuclease 4 (Shigella dysenteriae serotype 1 (strain Sd197)).